Reading from the N-terminus, the 468-residue chain is ATP synthase subunit beta 1 (468 aa).

ATP is bound at residue 151–158 (GGAGVGKT).

This sequence belongs to the ATPase alpha/beta chains family. As to quaternary structure, F-type ATPases have 2 components, CF(1) - the catalytic core - and CF(0) - the membrane proton channel. CF(1) has five subunits: alpha(3), beta(3), gamma(1), delta(1), epsilon(1). CF(0) has three main subunits: a(1), b(2) and c(9-12). The alpha and beta chains form an alternating ring which encloses part of the gamma chain. CF(1) is attached to CF(0) by a central stalk formed by the gamma and epsilon chains, while a peripheral stalk is formed by the delta and b chains.

The protein resides in the cell inner membrane. It catalyses the reaction ATP + H2O + 4 H(+)(in) = ADP + phosphate + 5 H(+)(out). Its function is as follows. Produces ATP from ADP in the presence of a proton gradient across the membrane. The catalytic sites are hosted primarily by the beta subunits. This Photobacterium profundum (strain SS9) protein is ATP synthase subunit beta 1.